Reading from the N-terminus, the 340-residue chain is Cysteinyl leukotriene receptor 1 (340 aa).

Topologically, residues 1–31 (MDETGNPTIPPASNNTCYDSIDDFRNQVYST) are extracellular. The N-linked (GlcNAc...) asparagine glycan is linked to Asn-14. The helical transmembrane segment at 32 to 52 (LYSMISVVGFFGNGFVLYVLV) threads the bilayer. At 53–60 (KTYHEKSA) the chain is on the cytoplasmic side. Residues 61–81 (FQVYMINLAVADLLCVCTLPL) traverse the membrane as a helical segment. Topologically, residues 82 to 109 (RVAYYVHKGIWLFGDFLCRLSTYALYVN) are extracellular. A disulfide bond links Cys-99 and Cys-176. A helical membrane pass occupies residues 110 to 130 (LYCSIFFMTAMSFFRCVAIVF). At 131-144 (PVQNISLVTQKKAR) the chain is on the cytoplasmic side. A helical membrane pass occupies residues 145–165 (LVCIAIWMFVILTSSPFLMAN). Residues 166-196 (TYKDEKNNTKCFEPPQDNQAKNYVLILHYVS) lie on the Extracellular side of the membrane. N-linked (GlcNAc...) asparagine glycosylation occurs at Asn-172. Residues 197–217 (LFIGFIIPFITIIVCYTMIIF) form a helical membrane-spanning segment. The Cytoplasmic portion of the chain corresponds to 218-233 (TLLKSSMKKNLSSRKR). Residues 234–254 (AIGMIIVVTAAFLVSFMPYHI) form a helical membrane-spanning segment. The Extracellular segment spans residues 255–279 (QRTIHLHFLHNKTKPCDSILRMQKS). N-linked (GlcNAc...) asparagine glycosylation occurs at Asn-265. A helical membrane pass occupies residues 280 to 300 (VVITLSLAASNCCFDPLLYFF). Residues 301 to 340 (SGGNFRRRLSTIRKYSLSSMTYIPKKKTSLPQKGKDICKE) are Cytoplasmic-facing.

The protein belongs to the G-protein coupled receptor 1 family.

The protein resides in the cell membrane. In terms of biological role, receptor for cysteinyl leukotrienes mediating bronchoconstriction of individuals with and without asthma. Stimulation by LTD4 results in the contraction and proliferation of smooth muscle, edema, eosinophil migration and damage to the mucus layer in the lung. This response is mediated via a G-protein that activates a phosphatidylinositol-calcium second messenger system. The chain is Cysteinyl leukotriene receptor 1 (CYSLTR1) from Cavia porcellus (Guinea pig).